A 202-amino-acid chain; its full sequence is dTTP/UTP pyrophosphatase (202 aa).

The Proton acceptor role is filled by Asp76.

It belongs to the Maf family. YhdE subfamily. It depends on a divalent metal cation as a cofactor.

The protein localises to the cytoplasm. The catalysed reaction is dTTP + H2O = dTMP + diphosphate + H(+). The enzyme catalyses UTP + H2O = UMP + diphosphate + H(+). Nucleoside triphosphate pyrophosphatase that hydrolyzes dTTP and UTP. May have a dual role in cell division arrest and in preventing the incorporation of modified nucleotides into cellular nucleic acids. This is dTTP/UTP pyrophosphatase from Neisseria meningitidis serogroup B (strain ATCC BAA-335 / MC58).